A 350-amino-acid chain; its full sequence is Uroporphyrinogen decarboxylase (350 aa).

Substrate-binding positions include 28 to 32 (RQAGR), aspartate 78, tyrosine 155, serine 210, and histidine 325.

It belongs to the uroporphyrinogen decarboxylase family. Homodimer.

The protein resides in the cytoplasm. The enzyme catalyses uroporphyrinogen III + 4 H(+) = coproporphyrinogen III + 4 CO2. Its pathway is porphyrin-containing compound metabolism; protoporphyrin-IX biosynthesis; coproporphyrinogen-III from 5-aminolevulinate: step 4/4. Catalyzes the decarboxylation of four acetate groups of uroporphyrinogen-III to yield coproporphyrinogen-III. This is Uroporphyrinogen decarboxylase from Picosynechococcus sp. (strain ATCC 27264 / PCC 7002 / PR-6) (Agmenellum quadruplicatum).